Reading from the N-terminus, the 448-residue chain is Nuclear distribution protein PAC1 (448 aa).

A LisH domain is found at 9–41; sequence QAEELHKSIIAYLAANNFQDSVTAMRTELNLGE. Positions 74-95 are disordered; it reads SATPTSLSNRKQDPASWLPAGP. WD repeat units lie at residues 102–143, 145–185, 189–236, 239–278, 283–343, 345–384, and 389–444; these read SHRT…RTVK, HTKA…KNIR, GHDH…CLKT, GHSD…PETK, GHEH…IKTL, GHDN…KCVK, and MHEH…TSLR.

This sequence belongs to the WD repeat LIS1/nudF family. Self-associates. Interacts with NDL1 and dynein.

The protein resides in the cytoplasm. It is found in the cytoskeleton. It localises to the spindle pole. Functionally, positively regulates the activity of the minus-end directed microtubule motor protein dynein. May enhance dynein-mediated microtubule sliding by targeting dynein to the microtubule plus end. Required for nuclear migration during vegetative growth as well as development. Required for retrograde early endosome (EE) transport from the hyphal tip. Required for localization of dynein to the mitotic spindle poles. Recruits additional proteins to the dynein complex at SPBs. The sequence is that of Nuclear distribution protein PAC1 from Fusarium vanettenii (strain ATCC MYA-4622 / CBS 123669 / FGSC 9596 / NRRL 45880 / 77-13-4) (Fusarium solani subsp. pisi).